We begin with the raw amino-acid sequence, 414 residues long: Probable sugar phosphate/phosphate translocator At1g06470 (414 aa).

9 helical membrane passes run 72–92 (VLKT…LTLY), 101–121 (LGKF…QAVL), 172–192 (TFAT…AFAF), 197–217 (PSLK…LTVA), 224–244 (FWGF…WCMT), 259–279 (FIFM…LSLL), 303–323 (FLML…YVLV), 328–348 (AVTV…VAVF), and 354–374 (FTWL…LFNW). Positions 106-216 (APLLMNTIHF…VISAGVLLTV (111 aa)) constitute an EamA domain.

This sequence belongs to the TPT transporter family. TPT (TC 2.A.7.9) subfamily.

It is found in the membrane. This is Probable sugar phosphate/phosphate translocator At1g06470 from Arabidopsis thaliana (Mouse-ear cress).